The sequence spans 408 residues: Broad specificity amino-acid racemase (408 aa).

A signal peptide spans 1-21 (MHKKTLLATLILGLLAGQAVA). A disulfide bridge links Cys-70 with Cys-96. The active-site Proton acceptor is the Lys-74. An N6-(pyridoxal phosphate)lysine modification is found at Lys-74. Arg-173 is a binding site for substrate. Catalysis depends on Tyr-300, which acts as the Proton acceptor. Residue Met-348 coordinates substrate.

The protein belongs to the alanine racemase family. Bsr subfamily. In terms of assembly, homodimer. The cofactor is pyridoxal 5'-phosphate.

It is found in the periplasm. The catalysed reaction is an L-alpha-amino acid = a D-alpha-amino acid. It catalyses the reaction L-lysine = D-lysine. It carries out the reaction L-arginine = D-arginine. The enzyme catalyses L-alanine = D-alanine. The catalysed reaction is L-serine = D-serine. It catalyses the reaction L-methionine = D-methionine. It carries out the reaction L-leucine = D-leucine. The enzyme catalyses L-cysteine = D-cysteine. The catalysed reaction is L-glutamine = D-glutamine. It catalyses the reaction L-asparagine = D-asparagine. It carries out the reaction L-histidine = D-histidine. In terms of biological role, amino-acid racemase able to utilize a broad range of substrates. Reversibly racemizes ten of the 19 natural chiral amino acids known, including both non-beta-branched aliphatic amino acids (Ala, Leu, Met, Ser, Cys, Gln and Asn) and positively charged amino acids (His, Lys and Arg). Is not active on negatively charged (Glu and Asp) or aromatic (Tyr, Trp and Phe) amino acids and displays minimal activity towards beta-branched aliphatic (Ile, Val and Thr) substrates. Enables bacteria to produce and release extracellular non-canonical D-amino acids (NCDAAs) that regulate diverse cellular processes. The protein is Broad specificity amino-acid racemase of Aeromonas hydrophila subsp. hydrophila (strain ATCC 7966 / DSM 30187 / BCRC 13018 / CCUG 14551 / JCM 1027 / KCTC 2358 / NCIMB 9240 / NCTC 8049).